The primary structure comprises 238 residues: 2-C-methyl-D-erythritol 4-phosphate cytidylyltransferase (238 aa).

It belongs to the IspD/TarI cytidylyltransferase family. IspD subfamily.

The catalysed reaction is 2-C-methyl-D-erythritol 4-phosphate + CTP + H(+) = 4-CDP-2-C-methyl-D-erythritol + diphosphate. It functions in the pathway isoprenoid biosynthesis; isopentenyl diphosphate biosynthesis via DXP pathway; isopentenyl diphosphate from 1-deoxy-D-xylulose 5-phosphate: step 2/6. Functionally, catalyzes the formation of 4-diphosphocytidyl-2-C-methyl-D-erythritol from CTP and 2-C-methyl-D-erythritol 4-phosphate (MEP). This is 2-C-methyl-D-erythritol 4-phosphate cytidylyltransferase from Pelotomaculum thermopropionicum (strain DSM 13744 / JCM 10971 / SI).